A 346-amino-acid polypeptide reads, in one-letter code: Protein Rae1 (346 aa).

WD repeat units lie at residues 17 to 61 (ASPP…ATVP), 64 to 105 (MKTM…VMQV), 126 to 148 (LMTGSWDKTLKFWDTRSPNPMMT), and 255 to 289 (VNDIAFHPVHGTLVTVGSDGTFSFWDKDARTKLKS).

The protein belongs to the WD repeat rae1 family. As to quaternary structure, interacts with hiw; the interaction with Rae1 may protect hiw from autophagy-mediated degradation. Interacts with Nup98-96. As to expression, head (at protein level).

It localises to the cytoplasm. It is found in the perinuclear region. The protein resides in the nucleus. Its subcellular location is the nucleus envelope. The protein localises to the chromosome. In terms of biological role, probable component of the nuclear pore complex (NPC) which regulates the nuclear export of specific mRNAs and promotes cell cycle progression during mitosis and male meiosis. Acts with Nup98-96 to promote the nuclear export of specific mRNAs such as Moe, however it does not appear to be required for general nuclear mRNA transport. Essential mitotic and male meiotic cell cycle regulator with roles in many aspects of the cell cycle including chromatin organization and condensation, spindle assembly, chromosome segregation, and maintaining nuclear structure. During male meiosis it is required for completion of meiosis I, as well as accurate cytokinesis of the secondary spermatocytes, and postmeiotic differentiation of spermatids. Acts as a downstream regulatory target of the Hippo/SWH (Sav/Wts/Hpo) signaling pathway to promote mitotic cell cycle progression and proliferation during wing and eye development, and thereby plays a key role in integrating the regulation of proliferation with organ size control. When the Hippo/SWH signaling pathway is inactive, Rae1 acts independently of yki to increase organ size by promoting mitotic S-phase entry and increase cellular proliferation. When the Hippo/SWH signaling pathway is active it inhibits the activity of Rae1 in a Wts-dependent manner to restrict organ growth. However, Rae1 is also able to negatively regulate the levels and activity of yki likely by activating the core kinases of the Hippo/SWH signaling pathway hpo and Wts and increasing the protein levels of hpo, Mer and Wts; it is therefore likely that it functions as part of a negative feedback loop with the Hippo/SWH signaling pathway to regulate pathway homeostasis and prevent organ overgrowth. Promotes mitotic cell cycle progression, at least in part, by increasing the accumulation of mitotic cyclins such as CycB, possibly by directly up-regulating cyclin transcripts or by inhibiting the anaphase promoting complex/cyclosome (APC/C) activator fzy. Also required in presynaptic, postmitotic motor neurons to restrain synaptic terminal growth. Promotes the expression and stability of the an E3 ubiquitin ligase of hiw, and is likely to function in the regulation of synaptic growth by binding to hiw and protecting it from autophagy-mediated degradation. The polypeptide is Protein Rae1 (Drosophila melanogaster (Fruit fly)).